Here is a 787-residue protein sequence, read N- to C-terminus: Mitochondrial 15S rRNA processing factor CCM1 (787 aa).

Residues 1–12 constitute a mitochondrion transit peptide; sequence MMLRLSVKKRCM. The span at 38 to 48 shows a compositional bias: basic residues; that stretch reads QKGKPTLRKSK. The tract at residues 38–58 is disordered; that stretch reads QKGKPTLRKSKGSNDGGAVNN. 3 PPR repeats span residues 286-320, 321-356, and 359-393; these read SRETYELMIQAYGKNNNLEKINMCLSEMKQNKLEP, SQKTFSNILSTCVYKANDHKQAVEIFDSMKFLSQKT, and DTRAYQDIIVSYVNNDNIEKALDLYREMITEKIEI.

It belongs to the CCM1 family. As to quaternary structure, binds to mitochondrial small subunit 15S rRNA.

The protein localises to the mitochondrion. Regulates mitochondrial small subunit maturation by controlling 15S rRNA 5'-end processing. Localizes to the 5' precursor of the 15S rRNA in a position that is subsequently occupied by mS47 in the mature yeast mtSSU. Uses structure and sequence-specific RNA recognition, binding to a single-stranded region of the precursor and specifically recognizing bases -6 to -1. The exchange of Ccm1 for mS47 is coupled to the irreversible removal of precursor rRNA that is accompanied by conformational changes of the mitoribosomal proteins uS5m and mS26. These conformational changes signal completion of 5'-end rRNA processing through protection of the mature 5'-end of the 15S rRNA and stabilization of mS47. The removal of the 5' precursor together with the dissociation of Ccm1 may be catalyzed by the 5'-3' exoribonuclease Pet127. Involved in the specific removal of group I introns in mitochondrial encoded transcripts. The sequence is that of Mitochondrial 15S rRNA processing factor CCM1 (CCM1) from Debaryomyces hansenii (strain ATCC 36239 / CBS 767 / BCRC 21394 / JCM 1990 / NBRC 0083 / IGC 2968) (Yeast).